We begin with the raw amino-acid sequence, 322 residues long: 1-aminocyclopropane-1-carboxylate oxidase 1 (322 aa).

The Fe2OG dioxygenase domain maps to 159 to 259 (PTFGTKVSSY…RMSIASFYNP (101 aa)). Histidine 183, aspartate 185, and histidine 240 together coordinate Fe cation.

It belongs to the iron/ascorbate-dependent oxidoreductase family. Fe cation is required as a cofactor.

It catalyses the reaction 1-aminocyclopropane-1-carboxylate + L-ascorbate + O2 = ethene + L-dehydroascorbate + hydrogen cyanide + CO2 + 2 H2O. The protein operates within alkene biosynthesis; ethylene biosynthesis via S-adenosyl-L-methionine; ethylene from S-adenosyl-L-methionine: step 2/2. This chain is 1-aminocyclopropane-1-carboxylate oxidase 1 (ACO1), found in Oryza sativa subsp. japonica (Rice).